The sequence spans 101 residues: Urease subunit beta (101 aa).

This sequence belongs to the urease beta subunit family. As to quaternary structure, heterotrimer of UreA (gamma), UreB (beta) and UreC (alpha) subunits. Three heterotrimers associate to form the active enzyme.

It is found in the cytoplasm. The catalysed reaction is urea + 2 H2O + H(+) = hydrogencarbonate + 2 NH4(+). It participates in nitrogen metabolism; urea degradation; CO(2) and NH(3) from urea (urease route): step 1/1. The polypeptide is Urease subunit beta (Chelativorans sp. (strain BNC1)).